Reading from the N-terminus, the 405-residue chain is Exodeoxyribonuclease 7 large subunit (405 aa).

The protein belongs to the XseA family. As to quaternary structure, heterooligomer composed of large and small subunits.

Its subcellular location is the cytoplasm. It carries out the reaction Exonucleolytic cleavage in either 5'- to 3'- or 3'- to 5'-direction to yield nucleoside 5'-phosphates.. Its function is as follows. Bidirectionally degrades single-stranded DNA into large acid-insoluble oligonucleotides, which are then degraded further into small acid-soluble oligonucleotides. This Halothermothrix orenii (strain H 168 / OCM 544 / DSM 9562) protein is Exodeoxyribonuclease 7 large subunit.